The chain runs to 299 residues: Exosome complex component rrp42 (299 aa).

Belongs to the RNase PH family. In terms of assembly, component of the RNA exosome complex. Specifically part of the catalytically inactive RNA exosome core complex (Exo-9) which may associate with the catalytic subunits rrp6 and dis3 in cytoplasmic- and nuclear-specific RNA exosome complex forms. Exo-9 is formed by a hexameric base ring of RNase PH domain-containing subunits and a cap ring consisting of csl4, rrp4 and rrp40.

The protein localises to the cytoplasm. Its subcellular location is the nucleus. The protein resides in the nucleolus. In terms of biological role, non-catalytic component of the RNA exosome complex which has 3'-&gt;5' exoribonuclease activity and participates in a multitude of cellular RNA processing and degradation events. In the nucleus, the RNA exosome complex is involved in proper maturation of stable RNA species such as rRNA, snRNA and snoRNA, in the elimination of RNA processing by-products and non-coding 'pervasive' transcripts, such as antisense RNA species and cryptic unstable transcripts (CUTs), and of mRNAs with processing defects, thereby limiting or excluding their export to the cytoplasm. In the cytoplasm, the RNA exosome complex is involved in general mRNA turnover and in RNA surveillance pathways, preventing translation of aberrant mRNAs. The catalytic inactive RNA exosome core complex of 9 subunits (Exo-9) is proposed to play a pivotal role in the binding and presentation of RNA for ribonucleolysis, and to serve as a scaffold for the association with catalytic subunits and accessory proteins or complexes. ski6 is part of the hexameric ring of RNase PH domain-containing subunits proposed to form a central channel which threads RNA substrates for degradation. The polypeptide is Exosome complex component rrp42 (rrp42) (Schizosaccharomyces pombe (strain 972 / ATCC 24843) (Fission yeast)).